The primary structure comprises 115 residues: UPF0738 protein SACOL1009 (115 aa).

This sequence belongs to the UPF0738 family.

The chain is UPF0738 protein SACOL1009 from Staphylococcus aureus (strain COL).